The sequence spans 309 residues: Elongation factor Ts, mitochondrial (309 aa).

This sequence belongs to the EF-Ts family.

The protein localises to the mitochondrion. In terms of biological role, associates with the EF-Tu.GDP complex and induces the exchange of GDP to GTP. It remains bound to the aminoacyl-tRNA.EF-Tu.GTP complex up to the GTP hydrolysis stage on the ribosome. This chain is Elongation factor Ts, mitochondrial (tsfm), found in Salmo salar (Atlantic salmon).